The sequence spans 154 residues: Avirulence protein ATR13 (154 aa).

Residues 1-19 (MRLVHAVLLPGIIVFVSNG) form the signal peptide. A RxLR motif is present at residues 38-41 (RQLR). The leucine heptad repeat region stretch occupies residues 50-92 (LSRASFGLGKAQDPLDKFFSKIIFSGKPIETSYSAKGIHEKII). The tract at residues 93–103 (EAHDLHVSKSK) is single repeat region. The highly variable C-terminus domain stretch occupies residues 104-154 (NAPIQYASVMEYLKKTYPGPDIERIVSTLERHDEVGAKDLGAKLRDALDRQ).

This sequence belongs to the RxLR effector family.

The protein localises to the secreted. The protein resides in the host cytoplasm. In terms of biological role, secreted effector that acts as an elicitor of hypersensitive response (HR) specifically on plants carrying defense protein RPP13. Recognition of ATR13 by RPP13 initiates defense responses that are effective against oomycete, bacterial and viral pathogens. The allele ATR13-Emco5 recognizes RPP13-Nd, the RPP13 defense protein from Arabidopsis thaliana ecotype Niederzenz. The polypeptide is Avirulence protein ATR13 (Hyaloperonospora arabidopsidis (Peronospora arabidopsidis)).